An 809-amino-acid polypeptide reads, in one-letter code: Sucrose synthase 3 (809 aa).

Residues 277–755 form a GT-B glycosyltransferase region; that stretch reads MVFNVVILSP…GLQRIYERYT (479 aa).

It belongs to the glycosyltransferase 1 family. Plant sucrose synthase subfamily. As to expression, detected in the whole plant with highest expression in developing siliques, vasculature of cotyledons and stomatal guard cells. Also detected throughout the mature parts of the root but not in the expanding zone.

It catalyses the reaction an NDP-alpha-D-glucose + D-fructose = a ribonucleoside 5'-diphosphate + sucrose + H(+). Functionally, sucrose-cleaving enzyme that provides UDP-glucose and fructose for various metabolic pathways. Modulates metabolic homeostasis and direct carbon towards starch synthesis in developing seeds. The chain is Sucrose synthase 3 (SUS3) from Arabidopsis thaliana (Mouse-ear cress).